Reading from the N-terminus, the 772-residue chain is Mitochondrial intermediate peptidase (772 aa).

The transit peptide at 1–37 (MLRTIILKAGSNASIPSLSRQNKLLRFFATAGAVSRT) directs the protein to the mitochondrion. H558 contacts Zn(2+). E559 is an active-site residue. Residues H562 and H565 each coordinate Zn(2+).

The protein belongs to the peptidase M3 family. It depends on Zn(2+) as a cofactor.

Its subcellular location is the mitochondrion matrix. The catalysed reaction is Release of an N-terminal octapeptide as second stage of processing of some proteins imported into the mitochondrion.. Stimulated by Fe(2+). Functionally, cleaves proteins, imported into the mitochondrion, to their mature size. While most mitochondrial precursor proteins are processed to the mature form in one step by mitochondrial processing peptidase (MPP), the sequential cleavage by MIP of an octapeptide after initial processing by MPP is a required step for a subgroup of nuclear-encoded precursor proteins destined for the matrix or the inner membrane. Cleaves precursor proteins of respiratory components, including subunits of the electron transport chain and tricarboxylic acid cycle enzymes, and components of the mitochondrial genetic machinery, including ribosomal proteins, translation factors, and proteins required for mitochondrial DNA metabolism. This Saccharomyces cerevisiae (strain YJM789) (Baker's yeast) protein is Mitochondrial intermediate peptidase (OCT1).